The sequence spans 493 residues: Probable phospho-2-dehydro-3-deoxyheptonate aldolase, chloroplastic (493 aa).

Residues 1 to 58 (MAMSNTSALASKLLPSCKPHQPTLTFFSPSTTCQKKPRSSRPISAAVHVTQPPKTPIS) constitute a chloroplast transit peptide.

This sequence belongs to the class-II DAHP synthase family.

Its subcellular location is the plastid. It is found in the chloroplast. It carries out the reaction D-erythrose 4-phosphate + phosphoenolpyruvate + H2O = 7-phospho-2-dehydro-3-deoxy-D-arabino-heptonate + phosphate. It participates in metabolic intermediate biosynthesis; chorismate biosynthesis; chorismate from D-erythrose 4-phosphate and phosphoenolpyruvate: step 1/7. In Catharanthus roseus (Madagascar periwinkle), this protein is Probable phospho-2-dehydro-3-deoxyheptonate aldolase, chloroplastic (DHS1).